The sequence spans 166 residues: NADH-quinone oxidoreductase subunit B 1 (166 aa).

[4Fe-4S] cluster contacts are provided by C39, C40, C106, and C135.

The protein belongs to the complex I 20 kDa subunit family. In terms of assembly, NDH-1 is composed of 14 different subunits. Subunits NuoB, C, D, E, F, and G constitute the peripheral sector of the complex. Requires [4Fe-4S] cluster as cofactor.

Its subcellular location is the cell membrane. The enzyme catalyses a quinone + NADH + 5 H(+)(in) = a quinol + NAD(+) + 4 H(+)(out). Functionally, NDH-1 shuttles electrons from NADH, via FMN and iron-sulfur (Fe-S) centers, to quinones in the respiratory chain. The immediate electron acceptor for the enzyme in this species is believed to be a menaquinone. Couples the redox reaction to proton translocation (for every two electrons transferred, four hydrogen ions are translocated across the cytoplasmic membrane), and thus conserves the redox energy in a proton gradient. The protein is NADH-quinone oxidoreductase subunit B 1 of Symbiobacterium thermophilum (strain DSM 24528 / JCM 14929 / IAM 14863 / T).